The sequence spans 64 residues: MSEETIVNCPTCGKTVVWGEQSPFRPFCSKRCQLIDLGEWAAEEKRIPSAGDLSDSDDWSEQQP.

Residues C9, C12, C28, and C32 each coordinate Zn(2+). The disordered stretch occupies residues K45 to P64. Residues S54 to P64 are compositionally biased toward acidic residues.

This sequence belongs to the DNA gyrase inhibitor YacG family. As to quaternary structure, interacts with GyrB. Requires Zn(2+) as cofactor.

In terms of biological role, inhibits all the catalytic activities of DNA gyrase by preventing its interaction with DNA. Acts by binding directly to the C-terminal domain of GyrB, which probably disrupts DNA binding by the gyrase. In Klebsiella pneumoniae subsp. pneumoniae (strain ATCC 700721 / MGH 78578), this protein is DNA gyrase inhibitor YacG.